A 392-amino-acid polypeptide reads, in one-letter code: Integrin-linked kinase-associated serine/threonine phosphatase 2C (392 aa).

Met1 is subject to N-acetylmethionine. Residues 1 to 90 form a disordered region; that stretch reads MDLFGDLPEP…TSEEEKNGSE (90 aa). Ser13 carries the phosphoserine modification. The span at 56–70 shows a compositional bias: polar residues; that stretch reads SGDSGSLATSISQMV. Over residues 72–90 the composition is skewed to basic and acidic residues; that stretch reads TEGKGAKRKTSEEEKNGSE. Positions 108-390 constitute a PPM-type phosphatase domain; that stretch reads KGYVAERKGE…DNVTVMVVRI (283 aa). Residues Asp152 and Gly153 each contribute to the Mn(2+) site. An N6-acetyllysine modification is found at Lys210. The Mn(2+) site is built by Asp326 and Asp381.

Belongs to the PP2C family. As to quaternary structure, interacts with ILK. Specific association with ILK is independent of the catalytic activity of either partner. Mg(2+) serves as cofactor. Mn(2+) is required as a cofactor. Widely expressed. Highest levels expressed in striated muscle. Much lower levels evident in various smooth muscle tissues.

Its subcellular location is the cytoplasm. The catalysed reaction is O-phospho-L-seryl-[protein] + H2O = L-seryl-[protein] + phosphate. It carries out the reaction O-phospho-L-threonyl-[protein] + H2O = L-threonyl-[protein] + phosphate. With respect to regulation, inhibited rather than stimulated by magnesium. In terms of biological role, protein phosphatase that may play a role in regulation of cell cycle progression via dephosphorylation of its substrates whose appropriate phosphorylation states might be crucial for cell proliferation. Selectively associates with integrin linked kinase (ILK), to modulate cell adhesion and growth factor signaling. Inhibits the ILK-GSK3B signaling axis and may play an important role in inhibiting oncogenic transformation. This chain is Integrin-linked kinase-associated serine/threonine phosphatase 2C (ILKAP), found in Homo sapiens (Human).